Here is a 329-residue protein sequence, read N- to C-terminus: MKLTVLVGGVGGARFLLGAQRLLGLGQFATPDDNARHELTAVVNIGDDAWIHGLRICPDLDTCMYTLGGGVDPQRGWGHRDETWHAKEELARYGVQPDWFQLGDRDLATHLVRTQMLRAGYPLAQITTALCDRWQPGATLLPVSNDRCETHVVVTDPTDQQQRAIHFQEWWVRYRAELPTHSFAFIGTETASATTEVTAAIADADVVMLAPSNPVVSIGAILAVPGIRAALRATRAPIIGYSPIIAGKPVRGMADACLSVIGVDTTAEAVGRHYGARAATGVLDYWLVAEGDQAEIDSVTVRSIPLLMSDPEATAQMVRAGLELAGVTV.

7,8-didemethyl-8-hydroxy-5-deazariboflavin is bound at residue D61.

It belongs to the CofD family. Homodimer. Requires Mg(2+) as cofactor.

The catalysed reaction is enolpyruvoyl-2-diphospho-5'-guanosine + 7,8-didemethyl-8-hydroxy-5-deazariboflavin = dehydro coenzyme F420-0 + GMP + H(+). It participates in cofactor biosynthesis; coenzyme F420 biosynthesis. Its function is as follows. Catalyzes the transfer of the phosphoenolpyruvate moiety from enoylpyruvoyl-2-diphospho-5'-guanosine (EPPG) to 7,8-didemethyl-8-hydroxy-5-deazariboflavin (FO) with the formation of dehydro coenzyme F420-0 and GMP. This is Phosphoenolpyruvate transferase from Mycobacterium ulcerans (strain Agy99).